The following is a 271-amino-acid chain: uncharacterized protein (271 aa).

This sequence belongs to the HAD-like hydrolase superfamily.

This is an uncharacterized protein from Staphylococcus aureus (strain MRSA252).